The chain runs to 190 residues: Pyridoxamine 5'-phosphate oxidase C1952.08c homolog (190 aa).

2 residues coordinate FMN: Ser62 and Lys69.

The protein belongs to the pyridoxamine 5'-phosphate oxidase family. The cofactor is FMN.

The protein resides in the cytoplasm. The protein localises to the nucleus. The polypeptide is Pyridoxamine 5'-phosphate oxidase C1952.08c homolog (Schizosaccharomyces pombe (strain 972 / ATCC 24843) (Fission yeast)).